Reading from the N-terminus, the 87-residue chain is Kappa-2-bungarotoxin (87 aa).

A signal peptide spans 1–21; sequence MKTLLLTLVVVTIVCLDLGYT. 5 disulfides stabilise this stretch: Cys-24–Cys-42, Cys-35–Cys-63, Cys-48–Cys-52, Cys-67–Cys-79, and Cys-80–Cys-85.

Belongs to the three-finger toxin family. Long-chain subfamily. Kappa-neurotoxin sub-subfamily. Homodimer and heterodimer with kappa 3-bungarotoxin; non-covalently linked. Expressed by the venom gland.

It localises to the secreted. In terms of biological role, postsynaptic neurotoxin that binds and inhibits neuronal nicotinic acetylcholine receptors (nAChR) with high affinity (IC(50)&lt;100 nM). Is a selective, and slowly reversible antagonist of alpha-3/CHRNA3-containing and some alpha-4/CHRNA4-containing AChRs. This chain is Kappa-2-bungarotoxin, found in Bungarus multicinctus (Many-banded krait).